The chain runs to 311 residues: MAAGLCPGRALLSRRGGALWALLGTARGRAAGPETHFGFQNVSEAERREKIYQVFENVAEKYDVMNDSMSLGIHRVWKDILVHKMNPSPGTLLVDVAGGTGDIAFRFLNYVRSVRERQLQQKLRHHQNLSWQEISKSYQEEKSNPLGDSQVVVCDINKEMLKAGKQKAQHLGYSEGLSWVLGNAEELHFDDDKFDVYTIAFGIRNVTRIDLALQEAYRVLKPGGRFLCLEFSHVSNPLLSRLYDLYSFQVIPVLGEVIAGDWKSYQYLVESIRRFPPQEELKAMIEDAGFLKVDYQNLNSGIVAIHSGFKL.

Residues 1-29 (MAAGLCPGRALLSRRGGALWALLGTARGR) constitute a mitochondrion transit peptide. Residues threonine 100, aspartate 155, and 183–184 (NA) each bind S-adenosyl-L-methionine.

Belongs to the class I-like SAM-binding methyltransferase superfamily. MenG/UbiE family. As to quaternary structure, component of a multi-subunit COQ enzyme complex, composed of at least COQ3, COQ4, COQ5, COQ6, COQ7 and COQ9.

It is found in the mitochondrion inner membrane. It carries out the reaction a 2-methoxy-6-(all-trans-polyprenyl)benzene-1,4-diol + S-adenosyl-L-methionine = a 5-methoxy-2-methyl-3-(all-trans-polyprenyl)benzene-1,4-diol + S-adenosyl-L-homocysteine + H(+). Its pathway is cofactor biosynthesis; ubiquinone biosynthesis. In terms of biological role, methyltransferase required for the conversion of 2-polyprenyl-6-methoxy-1,4-benzoquinol (DDMQH2) to 2-polyprenyl-3-methyl-6-methoxy-1,4-benzoquinol (DMQH2). The polypeptide is 2-methoxy-6-polyprenyl-1,4-benzoquinol methylase, mitochondrial (Gallus gallus (Chicken)).